A 264-amino-acid chain; its full sequence is Triosephosphate isomerase (264 aa).

13-15 provides a ligand contact to substrate; that stretch reads NWK. His106 serves as the catalytic Electrophile. The Proton acceptor role is filled by Glu179. Residues Gly185, Ser223, and 244-245 each bind substrate; that span reads GG.

This sequence belongs to the triosephosphate isomerase family. In terms of assembly, homodimer.

It localises to the cytoplasm. It catalyses the reaction D-glyceraldehyde 3-phosphate = dihydroxyacetone phosphate. The protein operates within carbohydrate biosynthesis; gluconeogenesis. Its pathway is carbohydrate degradation; glycolysis; D-glyceraldehyde 3-phosphate from glycerone phosphate: step 1/1. Its function is as follows. Involved in the gluconeogenesis. Catalyzes stereospecifically the conversion of dihydroxyacetone phosphate (DHAP) to D-glyceraldehyde-3-phosphate (G3P). This chain is Triosephosphate isomerase, found in Acinetobacter baumannii (strain AB0057).